The chain runs to 104 residues: Nucleoid-associated protein Ccon26_18480 (104 aa).

Residues 16-34 (DVQKQAKQMEEESKNKEFG) are compositionally biased toward basic and acidic residues. The disordered stretch occupies residues 16 to 38 (DVQKQAKQMEEESKNKEFGAKSG).

The protein belongs to the YbaB/EbfC family. As to quaternary structure, homodimer.

It localises to the cytoplasm. It is found in the nucleoid. Functionally, binds to DNA and alters its conformation. May be involved in regulation of gene expression, nucleoid organization and DNA protection. The sequence is that of Nucleoid-associated protein Ccon26_18480 from Campylobacter concisus (strain 13826).